The following is a 366-amino-acid chain: MAVKSSTVDVRAALQSAGAHYMNLIEFGILKVFIDHQIFDHIPAEGSISVTDLATRTKAEVSLLQRFSDYLVASEVLASPAPHELAHTTRSLSYRSEEIAAGFVSHVYHFFLRPMATWTAYFEENGLREPKDAKTIPLGLATGHPEEDLYGVLDKEPRLAYMFNVAQARSAAIFPMKGLYDFAWLREALEDHIGAESPAIVDIGGSHGLALKELLAENPFIPSKRCAVLDFPQTVEQAQQNLDEDLRDIHFIGGSMLEPLPVALHAAGIYQFRRVLSDFVDKDIILALEQVRRVCAPYSRVLIIEELVKASRDKFAIAQDISVLNFGGKRRSEADWHQLASQAGLQVRHVFEQTETAFAVVELGLA.

Residues 204–205, Asp-230, 255–256, Arg-273, and Arg-274 each bind S-adenosyl-L-methionine; these read GG and SM.

The protein belongs to the class I-like SAM-binding methyltransferase superfamily. Cation-independent O-methyltransferase family.

Its pathway is secondary metabolite biosynthesis. Methyltransferase; part of the gene cluster that mediates the biosynthesis of the trans-fused decalin-containing tetramic acid phomasetin, the stereochemical opposite of the HIV-1 integrase inhibitor equisetin. The PKS module of phm1 together with the enoylreductase phm4 catalyze the formation of the polyketide unit which is then conjugated to L-serine by the condensation domain of the phm1 NRPS module. Activity of the Dieckmann cyclase domain (RED) of phm1 results in release of the Dieckmann product intermediate. The Diels-Alderase phm7 then uses the Dieckmann product of phm1 as substrate and catalyzes the Diels-Alder cycloaddition to form the decalin ring of N-desmethylphomasetin. N-desmethylphomasetin is further methylated to phomasetin by the methyltransferase phm5. This Pyrenochaetopsis sp protein is Methyltransferase phm5.